A 249-amino-acid polypeptide reads, in one-letter code: Testis-expressed protein 101 (249 aa).

Residues Met-1–Glu-25 form the signal peptide. N-linked (GlcNAc...) asparagine glycans are attached at residues Asn-45 and Asn-159. In terms of domain architecture, UPAR/Ly6 spans Cys-140–His-211. A lipid anchor (GPI-anchor amidated asparagine) is attached at Asn-222. Positions Gly-223–Ser-249 are cleaved as a propeptide — removed in mature form.

In terms of assembly, interacts with VAMP3. Interacts with LY6K. Interacts with DPEP3; co-localized on the cell surface of spermatocytes, spermatids, and testicular spermatozoa, co-localized only in cytoplasmic droplets of caput and corpus epididymal sperm. Interacts with ADAM5. Post-translationally, N-glycosylated; by high mannose and/or biantennary complex and/or certain types of hybrid oligosaccharides; possesses different oligosaccharides chains according to its subcellular localization in the testis. Sheds from membrane raft by ACE and released from the cell surface of epididymal sperm while it passes through the caput epididymis leading to disappearance of TEX101 on spermatozoa; is essential to produce fertile spermatozoa. Detected in testis and spermatogonia. Not detected in spermatocytes. Detected in blood leukocytes.

It is found in the cell membrane. The protein resides in the membrane raft. Its subcellular location is the cytoplasmic vesicle. It localises to the secretory vesicle. The protein localises to the acrosome. It is found in the secreted. Functionally, plays a role in fertilization by controlling binding of sperm to zona pellucida and migration of spermatozoa into the oviduct. May play a role in signal transduction and promote protein tyrosine phosphorylation. The sequence is that of Testis-expressed protein 101 from Homo sapiens (Human).